A 257-amino-acid polypeptide reads, in one-letter code: Imidazole glycerol phosphate synthase subunit hisF1 (257 aa).

Active-site residues include Asp11 and Asp130.

The protein belongs to the HisA/HisF family. In terms of assembly, heterodimer of HisH and HisF.

It is found in the cytoplasm. The catalysed reaction is 5-[(5-phospho-1-deoxy-D-ribulos-1-ylimino)methylamino]-1-(5-phospho-beta-D-ribosyl)imidazole-4-carboxamide + L-glutamine = D-erythro-1-(imidazol-4-yl)glycerol 3-phosphate + 5-amino-1-(5-phospho-beta-D-ribosyl)imidazole-4-carboxamide + L-glutamate + H(+). The protein operates within amino-acid biosynthesis; L-histidine biosynthesis; L-histidine from 5-phospho-alpha-D-ribose 1-diphosphate: step 5/9. Functionally, IGPS catalyzes the conversion of PRFAR and glutamine to IGP, AICAR and glutamate. The HisF subunit catalyzes the cyclization activity that produces IGP and AICAR from PRFAR using the ammonia provided by the HisH subunit. This is Imidazole glycerol phosphate synthase subunit hisF1 (hisF1) from Vibrio vulnificus (strain YJ016).